A 229-amino-acid polypeptide reads, in one-letter code: N-acetyltransferase MPR1 (229 aa).

Residues 65–219 form the N-acetyltransferase domain; it reads FNLEIESGKT…DAIIYGKDLT (155 aa). Position 135 (asparagine 135) interacts with substrate. CoA is bound at residue 145 to 150; the sequence is RGQKVG. 172-173 is a binding site for substrate; the sequence is NL.

It belongs to the acetyltransferase family. As to quaternary structure, homodimer. In terms of processing, not glycosylated.

The protein resides in the cytoplasm. It is found in the mitochondrion. It catalyses the reaction L-glutamate 5-semialdehyde + acetyl-CoA = N-acetyl-L-glutamate 5-semialdehyde + CoA + H(+). N-acetyltransferase involved in oxidative stress resistance. Acetylates the toxic proline metabolism intermediate (S)-1-pyrroline-5-carboxylate (P5C), or more likely its spontaneously forming tautomer glutamate-5-semialdehyde (GSA) into N-acetyl-GSA for arginine synthesis in the mitochondria. P5C has been shown to increase the levels of reactive oxygen species (ROS) in the cell by inhibiting the function of the respiratory chain in the mitochondria. The enzyme is able to reduce intracellular ROS levels under P5C-induced oxidative stress and protects cells from damage by oxidative stress. Also acetylates and thereby detoxifies the proline analog azetidine-2-carboxylate (AZC), however it is unlikely that AZC is a natural substrate as it occurs only in plants belonging to the Lilaceae family. Does not acetylate proline. The sequence is that of N-acetyltransferase MPR1 from Saccharomyces cerevisiae (Baker's yeast).